The chain runs to 276 residues: Large ribosomal subunit protein uL2 (276 aa).

The interval 224-276 is disordered; it reads VMNPVDHPHGGGEGKAPIGRKSPMTPWGKPTLGYKTRKKKNKSDKFIIRRRKK. A compositionally biased stretch (basic residues) spans 258–276; the sequence is KTRKKKNKSDKFIIRRRKK.

It belongs to the universal ribosomal protein uL2 family. Part of the 50S ribosomal subunit. Forms a bridge to the 30S subunit in the 70S ribosome.

Functionally, one of the primary rRNA binding proteins. Required for association of the 30S and 50S subunits to form the 70S ribosome, for tRNA binding and peptide bond formation. It has been suggested to have peptidyltransferase activity; this is somewhat controversial. Makes several contacts with the 16S rRNA in the 70S ribosome. The protein is Large ribosomal subunit protein uL2 of Geobacillus stearothermophilus (Bacillus stearothermophilus).